The sequence spans 373 residues: Response regulator aspartate phosphatase J (373 aa).

TPR repeat units follow at residues 99–135 (YYFY…VEDE) and 146–179 (AEVY…GRRR). L-glutamyl-L-arginyl-glycyl-L-methionyl-L-threonine is bound by residues Glu-147, Tyr-150, Gln-181, Asp-192, Tyr-217, Asn-225, His-228, Gln-260, Tyr-297, Lys-300, and Asp-335. TPR repeat units lie at residues 220-253 (AAAY…FEEH) and 259-292 (VQAV…AAEW). The stretch at 334–367 (EDLLHDTAERFNQLEHYESAAFFYRRLMNIKKKL) is one TPR 5 repeat.

It belongs to the Rap family. Monomer in solution. Homodimer.

The protein resides in the cytoplasm. Its activity is regulated as follows. Inhibited in vitro by the competence and sporulation stimulating factor (CSF), encoded by phrC. However, CSF has at least three targets (RapB, RapC, and RapJ) and the physiological importance of RapJ inhibition by CSF is unknown. Interaction with CSF induces a conformational change in RapJ. Involved in the regulation of sporulation. Acts as a phosphatase that specifically dephosphorylates the sporulation initiation phosphotransferase Spo0F and inhibits its activity. The protein is Response regulator aspartate phosphatase J (rapJ) of Bacillus subtilis (strain 168).